Here is a 436-residue protein sequence, read N- to C-terminus: UPF0597 protein YhaM (436 aa).

Belongs to the UPF0597 family.

This is UPF0597 protein YhaM from Salmonella paratyphi C (strain RKS4594).